The following is a 314-amino-acid chain: Malate dehydrogenase (314 aa).

Residues Gly11 to Gly16 and Asp35 each bind NAD(+). Arg84 and Arg90 together coordinate substrate. NAD(+) is bound by residues Asn97 and Ile120 to Asn122. Substrate is bound by residues Asn122 and Arg153. The Proton acceptor role is filled by His177.

The protein belongs to the LDH/MDH superfamily. MDH type 3 family.

The catalysed reaction is (S)-malate + NAD(+) = oxaloacetate + NADH + H(+). Functionally, catalyzes the reversible oxidation of malate to oxaloacetate. In Rickettsia bellii (strain RML369-C), this protein is Malate dehydrogenase.